Reading from the N-terminus, the 387-residue chain is L-aspartate:5-guanidino-3-methyl-2-oxopentanoate transaminase (387 aa).

K237 carries the post-translational modification N6-(pyridoxal phosphate)lysine.

It belongs to the class-I pyridoxal-phosphate-dependent aminotransferase family. Pyridoxal 5'-phosphate is required as a cofactor.

It catalyses the reaction (3R)-5-guanidino-3-methyl-2-oxopentanoate + L-aspartate = (3R)-3-methyl-L-arginine + oxaloacetate. The protein operates within antibiotic biosynthesis. In terms of biological role, aminotransferase involved in the formation of the rare amino acid 3-methylarginine (MeArg), which is used as a potent antibiotic against the closely related soybean pathogen P.syringae pv. glycinea. Probably catalyzes transamination from the donor L-aspartate to 5-guanidino-3-methyl-2-oxopentanoic acid, generating 3-methylarginine. This Pseudomonas syringae pv. syringae protein is L-aspartate:5-guanidino-3-methyl-2-oxopentanoate transaminase.